We begin with the raw amino-acid sequence, 74 residues long: DNA-directed RNA polymerase subunit omega (74 aa).

This sequence belongs to the RNA polymerase subunit omega family. In terms of assembly, the RNAP catalytic core consists of 2 alpha, 1 beta, 1 beta' and 1 omega subunit. When a sigma factor is associated with the core the holoenzyme is formed, which can initiate transcription.

The enzyme catalyses RNA(n) + a ribonucleoside 5'-triphosphate = RNA(n+1) + diphosphate. Functionally, promotes RNA polymerase assembly. Latches the N- and C-terminal regions of the beta' subunit thereby facilitating its interaction with the beta and alpha subunits. In Marinomonas sp. (strain MWYL1), this protein is DNA-directed RNA polymerase subunit omega.